The chain runs to 51 residues: Insulin (51 aa).

Cystine bridges form between Cys-7–Cys-37, Cys-19–Cys-50, and Cys-36–Cys-41.

The protein belongs to the insulin family. Heterodimer of a B chain and an A chain linked by two disulfide bonds.

It localises to the secreted. Its function is as follows. Insulin decreases blood glucose concentration. It increases cell permeability to monosaccharides, amino acids and fatty acids. It accelerates glycolysis, the pentose phosphate cycle, and glycogen synthesis in liver. The polypeptide is Insulin (INS) (Elephas maximus (Indian elephant)).